The primary structure comprises 691 residues: Probable E3 ubiquitin-protein ligase RHG1A (691 aa).

Disordered stretches follow at residues 71 to 91, 151 to 235, 316 to 336, 349 to 373, and 395 to 501; these read SLGEASSSGTKDEASSHNEQR, GPGT…PRGM, SFVVSRNPNSTPVSIPPGSRT, VGGTSNSTAPVERNLHLDETRSRSI, and QSSR…MHNR. Residues 80-91 show a composition bias toward basic and acidic residues; sequence TKDEASSHNEQR. 2 stretches are compositionally biased toward polar residues: residues 204-213 and 317-328; these read GESSSWTPGS and FVVSRNPNSTPV. Positions 361–370 are enriched in basic and acidic residues; it reads RNLHLDETRS. A compositionally biased stretch (polar residues) spans 395-406; sequence QSSRNVTNGNLN. A compositionally biased stretch (low complexity) spans 407 to 419; that stretch reads SASSVSRTGSTTS. Polar residues predominate over residues 429–440; the sequence is NLAWTSYQNSPH. A compositionally biased stretch (low complexity) spans 454–465; that stretch reads RSLLSSLAADAT. The RING-type; atypical zinc finger occupies 637 to 678; sequence CCVCQEEYTEGEDMGTLECGHEFHSQCIKEWLKQKNLCPICK.

Expressed in stems, flowers, green siliques, cauline leaves, seeds and roots.

The enzyme catalyses S-ubiquitinyl-[E2 ubiquitin-conjugating enzyme]-L-cysteine + [acceptor protein]-L-lysine = [E2 ubiquitin-conjugating enzyme]-L-cysteine + N(6)-ubiquitinyl-[acceptor protein]-L-lysine.. Its pathway is protein modification; protein ubiquitination. Functionally, probable E3 ubiquitin-protein ligase that may possess E3 ubiquitin ligase activity in vitro. The polypeptide is Probable E3 ubiquitin-protein ligase RHG1A (Arabidopsis thaliana (Mouse-ear cress)).